A 315-amino-acid polypeptide reads, in one-letter code: Glycine--tRNA ligase alpha subunit (315 aa).

The protein belongs to the class-II aminoacyl-tRNA synthetase family. As to quaternary structure, tetramer of two alpha and two beta subunits.

Its subcellular location is the cytoplasm. It carries out the reaction tRNA(Gly) + glycine + ATP = glycyl-tRNA(Gly) + AMP + diphosphate. The chain is Glycine--tRNA ligase alpha subunit from Pseudomonas putida (strain W619).